The sequence spans 138 residues: Transcription antitermination protein NusB (138 aa).

Belongs to the NusB family.

Functionally, involved in transcription antitermination. Required for transcription of ribosomal RNA (rRNA) genes. Binds specifically to the boxA antiterminator sequence of the ribosomal RNA (rrn) operons. The sequence is that of Transcription antitermination protein NusB from Helicobacter pylori (strain Shi470).